Consider the following 466-residue polypeptide: Citrate synthase, mitochondrial (466 aa).

A mitochondrion-targeting transit peptide spans 1–27 (MALLTAAARLFGAKNASCLVLAARHAS). The SIFI-degron signature appears at 2 to 21 (ALLTAAARLFGAKNASCLVL). Residue Lys-57 is modified to N6-succinyllysine. Position 76 is an N6-acetyllysine; alternate (Lys-76). An N6-succinyllysine; alternate modification is found at Lys-76. N6-succinyllysine occurs at positions 103 and 193. Ser-226 carries the post-translational modification Phosphoserine. His-301 is a catalytic residue. N6-acetyllysine; alternate is present on residues Lys-321 and Lys-327. An N6-succinyllysine; alternate mark is found at Lys-321 and Lys-327. Residue His-347 is part of the active site. Oxaloacetate is bound at residue Arg-356. The residue at position 375 (Lys-375) is an N6-acetyllysine; alternate. Lys-375 carries the post-translational modification N6-succinyllysine; alternate. Lys-382 bears the N6-acetyllysine mark. N6-acetyllysine; alternate is present on Lys-393. Lys-393 bears the N6-succinyllysine; alternate mark. At Lys-395 the chain carries N6,N6,N6-trimethyllysine. Asp-402 is a catalytic residue. Oxaloacetate is bound by residues Arg-428 and Arg-448. Residue Lys-450 is modified to N6-succinyllysine. Lys-459 is modified (N6-acetyllysine; alternate). Residue Lys-459 is modified to N6-succinyllysine; alternate.

The protein belongs to the citrate synthase family. As to quaternary structure, homodimer. In terms of processing, methylated. Trimethylation at Lys-395 by CSKMT decreases citrate synthase activity. In response to mitochondrial stress, the precursor protein is ubiquitinated by the SIFI complex in the cytoplasm before mitochondrial import, leading to its degradation. Within the SIFI complex, UBR4 initiates ubiquitin chain that are further elongated or branched by KCMF1.

Its subcellular location is the mitochondrion matrix. The enzyme catalyses oxaloacetate + acetyl-CoA + H2O = citrate + CoA + H(+). It functions in the pathway carbohydrate metabolism; tricarboxylic acid cycle; isocitrate from oxaloacetate: step 1/2. Its function is as follows. Key enzyme of the Krebs tricarboxylic acid cycle which catalyzes the synthesis of citrate from acetyl coenzyme A and oxaloacetate. The protein is Citrate synthase, mitochondrial (CS) of Bos taurus (Bovine).